The primary structure comprises 413 residues: Arginine biosynthesis bifunctional protein ArgJ (413 aa).

Substrate-binding residues include T158, K184, T195, E285, N408, and S413. The Nucleophile role is filled by T195.

This sequence belongs to the ArgJ family. Heterotetramer of two alpha and two beta chains.

It localises to the cytoplasm. It catalyses the reaction N(2)-acetyl-L-ornithine + L-glutamate = N-acetyl-L-glutamate + L-ornithine. The catalysed reaction is L-glutamate + acetyl-CoA = N-acetyl-L-glutamate + CoA + H(+). It participates in amino-acid biosynthesis; L-arginine biosynthesis; L-ornithine and N-acetyl-L-glutamate from L-glutamate and N(2)-acetyl-L-ornithine (cyclic): step 1/1. It functions in the pathway amino-acid biosynthesis; L-arginine biosynthesis; N(2)-acetyl-L-ornithine from L-glutamate: step 1/4. Functionally, catalyzes two activities which are involved in the cyclic version of arginine biosynthesis: the synthesis of N-acetylglutamate from glutamate and acetyl-CoA as the acetyl donor, and of ornithine by transacetylation between N(2)-acetylornithine and glutamate. This is Arginine biosynthesis bifunctional protein ArgJ from Brucella melitensis biotype 1 (strain ATCC 23456 / CCUG 17765 / NCTC 10094 / 16M).